A 151-amino-acid chain; its full sequence is UPF0756 membrane protein GWCH70_2680 (151 aa).

4 consecutive transmembrane segments (helical) span residues 5–25 (ILFL…SLMI), 53–73 (WGVT…EIGF), 86–106 (WIAL…VTLL), and 116–136 (LVFG…GPLI).

It belongs to the UPF0756 family.

It localises to the cell membrane. This Geobacillus sp. (strain WCH70) protein is UPF0756 membrane protein GWCH70_2680.